We begin with the raw amino-acid sequence, 220 residues long: Adenylate kinase (220 aa).

Position 10 to 15 (10 to 15 (GAGKGT)) interacts with ATP. Residues 30–59 (STGDMLRAAVKAGTPLGVEAKTYMDEGKLV) form an NMP region. Residues threonine 31, arginine 36, 57–59 (KLV), 85–88 (GFPR), and glutamine 92 each bind AMP. The segment at 122–159 (GRRTHPASGRTYHVKFNPPKVEGKDDVTGEPLVQRDDD) is LID. ATP-binding positions include arginine 123 and 132 to 133 (TY). 2 residues coordinate AMP: arginine 156 and arginine 167. Glycine 206 lines the ATP pocket.

This sequence belongs to the adenylate kinase family. In terms of assembly, monomer.

It is found in the cytoplasm. The catalysed reaction is AMP + ATP = 2 ADP. Its pathway is purine metabolism; AMP biosynthesis via salvage pathway; AMP from ADP: step 1/1. In terms of biological role, catalyzes the reversible transfer of the terminal phosphate group between ATP and AMP. Plays an important role in cellular energy homeostasis and in adenine nucleotide metabolism. The chain is Adenylate kinase from Burkholderia mallei (strain NCTC 10247).